Here is a 260-residue protein sequence, read N- to C-terminus: Cytosolic Fe-S cluster assembly factor Nubp2 homolog (260 aa).

14-21 contacts ATP; sequence GKGGVGKS. Positions 188 and 191 each coordinate [4Fe-4S] cluster.

The protein belongs to the Mrp/NBP35 ATP-binding proteins family. NUBP2/CFD1 subfamily. Heterotetramer of 2 Nubp1 and 2 Nubp2 chains. [4Fe-4S] cluster is required as a cofactor.

It localises to the cytoplasm. Component of the cytosolic iron-sulfur (Fe/S) protein assembly (CIA) machinery. Required for maturation of extramitochondrial Fe-S proteins. The Nubp1-Nubp2 heterotetramer forms a Fe-S scaffold complex, mediating the de novo assembly of an Fe-S cluster and its transfer to target apoproteins. The sequence is that of Cytosolic Fe-S cluster assembly factor Nubp2 homolog from Drosophila erecta (Fruit fly).